The sequence spans 364 residues: Palmitoyltransferase ZDHHC9 (364 aa).

Topologically, residues 1–35 (MSVMVVRKKVTRKWEKLPGRNTFCCDGRVMMARQK) are cytoplasmic. A helical membrane pass occupies residues 36 to 56 (GIFYLTLFLILGTCTLFFAFE). Topologically, residues 57 to 63 (CRYLAVQ) are lumenal. The helical transmembrane segment at 64–84 (LSPAIPVFAAMLFLFSMATLL) threads the bilayer. Over 85–183 (RTSFSDPGVI…NCVGKRNYRY (99 aa)) the chain is Cytoplasmic. The DHHC domain maps to 139–189 (KYCYTCKIFRPPRASHCSICDNCVERFDHHCPWVGNCVGKRNYRYFYLFIL). The S-palmitoyl cysteine intermediate role is filled by Cys-169. A helical membrane pass occupies residues 184–204 (FYLFILSLSLLTIYVFAFNIV). Over 205-228 (YVALKSLKIGFLETLKETPGTVLE) the chain is Lumenal. A helical membrane pass occupies residues 229 to 249 (VLICFFTLWSVVGLTGFHTFL). Over 250-364 (VALNQTTNED…PPQEAAEAEK (115 aa)) the chain is Cytoplasmic. Positions 303 to 364 (PLEESGSRPP…PPQEAAEAEK (62 aa)) are disordered. Over residues 310 to 323 (RPPSTQETSSSLLP) the composition is skewed to polar residues. Residues 346 to 356 (EMPPPEPPEPP) are compositionally biased toward pro residues.

Belongs to the DHHC palmitoyltransferase family. ERF2/ZDHHC9 subfamily. In terms of assembly, interacts with GOLGA7. In terms of tissue distribution, highly expressed in kidney, skeletal muscle, brain, lung and liver. Absent in thymus, spleen and leukocytes.

It is found in the endoplasmic reticulum membrane. The protein resides in the golgi apparatus membrane. The enzyme catalyses L-cysteinyl-[protein] + hexadecanoyl-CoA = S-hexadecanoyl-L-cysteinyl-[protein] + CoA. Its function is as follows. Palmitoyltransferase that catalyzes the addition of palmitate onto various protein substrates, such as ADRB2, GSDMD, HRAS, NRAS and CGAS. The ZDHHC9-GOLGA7 complex is a palmitoyltransferase specific for HRAS and NRAS. May have a palmitoyltransferase activity toward the beta-2 adrenergic receptor/ADRB2 and therefore regulate G protein-coupled receptor signaling. Acts as a regulator of innate immunity by catalyzing palmitoylation of CGAS, thereby promoting CGAS homodimerization and cyclic GMP-AMP synthase activity. Activates pyroptosis by catalyzing palmitoylation of gasdermin-D (GSDMD), thereby promoting membrane translocation and pore formation of GSDMD. (Microbial infection) Through a sequential action with ZDHHC20, rapidly and efficiently palmitoylates SARS coronavirus-2/SARS-CoV-2 spike protein following its synthesis in the endoplasmic reticulum (ER). In the infected cell, promotes spike biogenesis by protecting it from premature ER degradation, increases half-life and controls the lipid organization of its immediate membrane environment. Once the virus has formed, spike palmitoylation controls fusion with the target cell. The polypeptide is Palmitoyltransferase ZDHHC9 (Homo sapiens (Human)).